Here is a 137-residue protein sequence, read N- to C-terminus: Small ribosomal subunit protein bS16 (137 aa).

2 stretches are compositionally biased toward basic and acidic residues: residues 80 to 99 (KSPE…KRLQ) and 111 to 125 (VATE…KEAP). The disordered stretch occupies residues 80–137 (KSPEEAQKGGMRKGEFKRLQAEQAAKAQKKAVATEEPKAEEAKEAPPAESQAAEGKEE). Over residues 126–137 (PAESQAAEGKEE) the composition is skewed to low complexity.

It belongs to the bacterial ribosomal protein bS16 family.

In Coxiella burnetii (strain Dugway 5J108-111), this protein is Small ribosomal subunit protein bS16.